Consider the following 203-residue polypeptide: Putative 3-methyladenine DNA glycosylase (203 aa).

This sequence belongs to the DNA glycosylase MPG family.

This Clostridium beijerinckii (strain ATCC 51743 / NCIMB 8052) (Clostridium acetobutylicum) protein is Putative 3-methyladenine DNA glycosylase.